The sequence spans 81 residues: Serine protease inhibitor Kazal-type 2 (81 aa).

The signal sequence occupies residues 1-21 (MALAVLRLALLLLAVTFAGPL). The region spanning 27 to 81 (KYKTPFCARYQLPGCPRDFNPVCGTDMITYPNECTLCMKIRESGQNIKILRRGPC) is the Kazal-like domain. 3 cysteine pairs are disulfide-bonded: Cys33–Cys63, Cys41–Cys60, and Cys49–Cys81.

More abundant in epididymis than in testis.

It is found in the secreted. Its subcellular location is the cytoplasmic vesicle. The protein resides in the secretory vesicle. The protein localises to the acrosome. Functionally, strong inhibitor of acrosin in male and/or female genital tract. Also inhibits trypsin. As a strong inhibitor of acrosin, it is required for normal spermiogenesis. It probably hinders premature activation of proacrosin and other proteases, thus preventing the cascade of events leading to spermiogenesis defects. May be involved in the regulation of serine protease-dependent germ cell apoptosis. It also inhibits trypsin. In Macaca fascicularis (Crab-eating macaque), this protein is Serine protease inhibitor Kazal-type 2 (SPINK2).